The primary structure comprises 414 residues: Serine/arginine-rich splicing factor SR45 (414 aa).

2 disordered regions span residues 1–95 (MAKP…KAVQ) and 175–414 (LPPR…PRKT). Composition is skewed to low complexity over residues 10–34 (SPSVSGSSSRSSSRSRSGSSPSRSI) and 42–60 (RSLSSSSSPSRSVSSGSRS). A Nuclear localization signal 1 motif is present at residues 62–69 (PRRGKSPA). Phosphoserine is present on Ser77. In terms of domain architecture, RRM spans 98-176 (LVLHVDSLSR…KVVKATFTLP (79 aa)). Over residues 176–191 (PPRQKVSSPPKPVSAA) the composition is skewed to low complexity. A compositionally biased stretch (basic and acidic residues) spans 205-220 (DAEKDGGPRRPRETSP). Positions 218-219 (TS) are required for isoform 1 function in petal development. The span at 228–243 (PRRRSPLPRRGLSPRR) shows a compositional bias: basic residues. The Nuclear localization signal 2 signature appears at 229 to 236 (RRRSPLPR). Residue Ser256 is modified to Phosphoserine. Short sequence motifs (nuclear localization signal) lie at residues 284-291 (PRRYRSPP), 318-325 (PRRLRSPP), and 338-345 (IRRPGRSR). Composition is skewed to basic residues over residues 285–343 (RRYR…RPGR) and 352–363 (RKGRGPAGRRGR). The span at 364-373 (SSSYSSSPSP) shows a compositional bias: low complexity. The short motif at 373–380 (PRRIPRKI) is the Nuclear localization signal 6 element. The span at 375–394 (RIPRKISRSRSPKRPLRGKR) shows a compositional bias: basic residues. Positions 404–414 (SPPPPPPPRKT) are enriched in pro residues.

Belongs to the splicing factor SR family. SR45 subfamily. In terms of assembly, component of the spliceosome. Interacts with AFC2, U2AF35A, U2AF35B, RNU1, SCL33 and SKIP. The interaction with AFC2 depends on phosphorylation status. Interaction with RNU1 defines initial 5' splice sites and interaction with U2AF35B 3' splice sites in the early stage of spliceosome assembly. Post-translationally, phosphorylated by AFC2. The phosphorylation status regulates intranuclear distribution. In terms of tissue distribution, especially present in actively growing regions and dividing cells. Mostly expressed in roots (primary and secondary root meristem), shoot apical meristem (SAM), leaf primordia, pollen and inflorescence, and, to a lower extent, in leaves, vascular tissue, hydathode and fruits.

The protein localises to the nucleus speckle. Its subcellular location is the nucleus. It is found in the nucleoplasm. Functionally, involved in 5' and 3' splicing site selection of introns, and may bridge the 5' and 3' components of the spliceosome. Isoform 1 is required during flower petal development and isoform 2 is involved in root growth. Negatively regulates glucose and abscisic acid (ABA) signaling during early seedling development. Involved in the RNA-directed DNA methylation pathway. Modulates KIN10 stability in response to sugars, probably through the splicing regulation of 5PTASE13, a protein implicated in the proteasomal degradation of KIN10. The protein is Serine/arginine-rich splicing factor SR45 of Arabidopsis thaliana (Mouse-ear cress).